The sequence spans 98 residues: NADH-ubiquinone oxidoreductase chain 4L (98 aa).

3 helical membrane-spanning segments follow: residues 1–21 (MSLI…GLLM), 29–49 (SLLC…MMVL), and 61–81 (IILL…LVMI).

It belongs to the complex I subunit 4L family. In terms of assembly, core subunit of respiratory chain NADH dehydrogenase (Complex I) which is composed of 45 different subunits.

It localises to the mitochondrion inner membrane. It carries out the reaction a ubiquinone + NADH + 5 H(+)(in) = a ubiquinol + NAD(+) + 4 H(+)(out). Functionally, core subunit of the mitochondrial membrane respiratory chain NADH dehydrogenase (Complex I) which catalyzes electron transfer from NADH through the respiratory chain, using ubiquinone as an electron acceptor. Part of the enzyme membrane arm which is embedded in the lipid bilayer and involved in proton translocation. This chain is NADH-ubiquinone oxidoreductase chain 4L (MT-ND4L), found in Rhinoceros unicornis (Greater Indian rhinoceros).